The following is a 473-amino-acid chain: ATP-dependent 6-phosphofructokinase 1 (473 aa).

Position 71 is a phosphoserine (serine 71). Residues glycine 102, 165–166, and 190–193 contribute to the ATP site; these read RG and GDGS. Aspartate 191 is a binding site for Mg(2+). Residues 219–221, 264–266, glutamate 320, and 376–379 each bind substrate; these read TID, MGR, and YMIR. Aspartate 221 functions as the Proton acceptor in the catalytic mechanism.

It belongs to the phosphofructokinase type A (PFKA) family. PPi-dependent PFK group II subfamily. Atypical ATP-dependent clade 'X' sub-subfamily. Homotetramer. Mg(2+) serves as cofactor. In terms of tissue distribution, expressed in roots, leaves, stems and flowers.

It localises to the cytoplasm. The catalysed reaction is beta-D-fructose 6-phosphate + ATP = beta-D-fructose 1,6-bisphosphate + ADP + H(+). The protein operates within carbohydrate degradation; glycolysis; D-glyceraldehyde 3-phosphate and glycerone phosphate from D-glucose: step 3/4. With respect to regulation, allosterically activated by AMP. Functionally, catalyzes the phosphorylation of D-fructose 6-phosphate to fructose 1,6-bisphosphate by ATP, the first committing step of glycolysis. The sequence is that of ATP-dependent 6-phosphofructokinase 1 from Arabidopsis thaliana (Mouse-ear cress).